We begin with the raw amino-acid sequence, 383 residues long: Putative glutamate--cysteine ligase 2-1 (383 aa).

It belongs to the glutamate--cysteine ligase type 2 family. YbdK subfamily.

The catalysed reaction is L-cysteine + L-glutamate + ATP = gamma-L-glutamyl-L-cysteine + ADP + phosphate + H(+). In terms of biological role, ATP-dependent carboxylate-amine ligase which exhibits weak glutamate--cysteine ligase activity. This Legionella pneumophila (strain Corby) protein is Putative glutamate--cysteine ligase 2-1.